The chain runs to 291 residues: Beta-lactamase CTX-M-8 (291 aa).

The first 30 residues, 1–30 (MMRHRVKRMMLMTTACISLLLGSAPLYAQA), serve as a signal peptide directing secretion. S73 (nucleophile; acyl-ester intermediate) is an active-site residue. K76, S133, E169, and S240 together coordinate a beta-lactam.

The protein belongs to the class-A beta-lactamase family. In terms of assembly, monomer.

It localises to the secreted. The catalysed reaction is a beta-lactam + H2O = a substituted beta-amino acid. Its activity is regulated as follows. Inhibited by the beta-lactamase-blocking agents clavulanic acid, tazobactam and sulbactam; in the DH5alpha strain of E.coli. In terms of biological role, extended-spectrum beta-lactamase (ESBL) which confers resistance to penicillins, as well as first, third and fourth-generation cephalosporins. Has cefotaxime-hydrolyzing activity. Inactive against cephalosporin antibiotic, cefoxitin, and the carbapenem, imipenem. This chain is Beta-lactamase CTX-M-8, found in Citrobacter amalonaticus.